Consider the following 212-residue polypeptide: MAYAYLFKYIIIGDTGVGKSCLLLQFTDKRFQPVHDLTIGVEFGARMITIDGKQIKLQIWDTAGQESFRSITRSYYRGAAGALLVYDITRRDTFNHLTTWLEDARQHSNSNMVIMLIGNKSDLESRREVKKEEGEAFAREHGLIFMETSAKTASNVEEAFINTAKEIYEKIQEGVFDINNEANGIKIGPQHGATNATHAGNQGGQQAGGGCC.

Position 2 is an N-acetylalanine (alanine 2). The required for interaction with PRKCI stretch occupies residues 2–19; sequence AYAYLFKYIIIGDTGVGK. GTP-binding residues include glycine 16, valine 17, glycine 18, lysine 19, serine 20, cysteine 21, and threonine 38. Serine 20 contacts Mg(2+). Positions 37–42 match the Switch 1 motif; the sequence is LTIGVE. Residues threonine 38 and aspartate 61 each coordinate Mg(2+). A Switch 2 motif is present at residues 63-72; sequence AGQESFRSIT. The GTP site is built by glycine 64, asparagine 119, lysine 120, aspartate 122, alanine 150, and lysine 151. 2 S-geranylgeranyl cysteine lipidation sites follow: cysteine 211 and cysteine 212.

It belongs to the small GTPase superfamily. Rab family. In terms of assembly, interacts with PRKCI. Interacts with TRIP11. Interacts (in GTP-bound form) with GARIN1B. Interacts (GTP-bound) with HOPS complex component VPS39; interaction contributes to obtaining a functional HOPS complex that promotes autophagosome-lysosome membrane fusion driven by STX17-SNAP29-VAMP8. May interact with VPS41. Mg(2+) is required as a cofactor. Prenylated. Prenylation is required for association with cellular membranes. As to expression, brain and parietal cells.

The protein localises to the endoplasmic reticulum-Golgi intermediate compartment membrane. Its subcellular location is the melanosome. The protein resides in the endoplasmic reticulum membrane. It is found in the golgi apparatus membrane. It localises to the cytoplasmic vesicle. The protein localises to the secretory vesicle. Its subcellular location is the acrosome. The protein resides in the autophagosome membrane. It carries out the reaction GTP + H2O = GDP + phosphate + H(+). With respect to regulation, regulated by guanine nucleotide exchange factors (GEFs) which promote the exchange of bound GDP for free GTP, GTPase activating proteins (GAPs) which increase the GTP hydrolysis activity, and GDP dissociation inhibitors (GDIs) which inhibit the dissociation of the nucleotide from the GTPase. Functionally, the small GTPases Rab are key regulators of intracellular membrane trafficking, from the formation of transport vesicles to their fusion with membranes. Rabs cycle between active GTP-bound and inactive GDP-bound states. In their active state, drive transport of vesicular carriers from donor organelles to acceptor organelles to regulate the membrane traffic that maintains organelle identity and morphology. RAB2A regulates autophagy by promoting autophagosome-lysosome fusion via recruitment of the HOPS endosomal tethering complex; this process involves autophagosomal RAB2A and lysosomal RAB39A recruitment of HOPS subcomplexes VPS39-VPS11 and VPS41-VPS16-VPS18-VPS33A, respectively, which assemble into a functional complex to mediate membrane tethering and SNAREs-driven membrane fusion. Required for protein transport from the endoplasmic reticulum to the Golgi complex. Regulates the compacted morphology of the Golgi. Together with RAB2B, redundantly required for efficient autophagic flux. The polypeptide is Ras-related protein Rab-2A (RAB2A) (Oryctolagus cuniculus (Rabbit)).